A 173-amino-acid chain; its full sequence is ATP synthase subunit b (173 aa).

Residues 20 to 40 form a helical membrane-spanning segment; the sequence is IIATLAIFLVLMFLLKKVAWG.

The protein belongs to the ATPase B chain family. F-type ATPases have 2 components, F(1) - the catalytic core - and F(0) - the membrane proton channel. F(1) has five subunits: alpha(3), beta(3), gamma(1), delta(1), epsilon(1). F(0) has three main subunits: a(1), b(2) and c(10-14). The alpha and beta chains form an alternating ring which encloses part of the gamma chain. F(1) is attached to F(0) by a central stalk formed by the gamma and epsilon chains, while a peripheral stalk is formed by the delta and b chains.

The protein resides in the cell membrane. F(1)F(0) ATP synthase produces ATP from ADP in the presence of a proton or sodium gradient. F-type ATPases consist of two structural domains, F(1) containing the extramembraneous catalytic core and F(0) containing the membrane proton channel, linked together by a central stalk and a peripheral stalk. During catalysis, ATP synthesis in the catalytic domain of F(1) is coupled via a rotary mechanism of the central stalk subunits to proton translocation. Its function is as follows. Component of the F(0) channel, it forms part of the peripheral stalk, linking F(1) to F(0). This Lysinibacillus sphaericus (strain C3-41) protein is ATP synthase subunit b.